The primary structure comprises 284 residues: Tropomyosin (284 aa).

A coiled-coil region spans residues 1–284 (MDGIKKKMIA…DQTFAELTGY (284 aa)). 2 stretches are compositionally biased toward basic and acidic residues: residues 29–42 (LKQKEEEQEKKETE) and 111–136 (AKFDEASKTAEESERGRKELEIRSIA). Disordered regions lie at residues 29 to 49 (LKQKEEEQEKKETEIGELNNR) and 111 to 149 (AKFDEASKTAEESERGRKELEIRSIADDEGLSQLEDQQK).

It belongs to the tropomyosin family.

Its function is as follows. Tropomyosin, in association with the troponin complex, plays a central role in the calcium dependent regulation of muscle contraction. This is Tropomyosin from Clonorchis sinensis (Chinese liver fluke).